The chain runs to 63 residues: Large ribosomal subunit protein bL28 (63 aa).

This sequence belongs to the bacterial ribosomal protein bL28 family.

In Solibacter usitatus (strain Ellin6076), this protein is Large ribosomal subunit protein bL28.